The chain runs to 102 residues: Small ribosomal subunit protein uS10 (102 aa).

It belongs to the universal ribosomal protein uS10 family. Part of the 30S ribosomal subunit.

In terms of biological role, involved in the binding of tRNA to the ribosomes. This is Small ribosomal subunit protein uS10 from Frankia alni (strain DSM 45986 / CECT 9034 / ACN14a).